The chain runs to 689 residues: Elongation factor G (689 aa).

The tr-type G domain maps to 8–283 (SKCRNIGIMA…AVVDFLPAPN (276 aa)). GTP is bound by residues 17 to 24 (AHIDAGKT), 81 to 85 (DTPGH), and 135 to 138 (NKMD).

It belongs to the TRAFAC class translation factor GTPase superfamily. Classic translation factor GTPase family. EF-G/EF-2 subfamily.

It is found in the cytoplasm. Catalyzes the GTP-dependent ribosomal translocation step during translation elongation. During this step, the ribosome changes from the pre-translocational (PRE) to the post-translocational (POST) state as the newly formed A-site-bound peptidyl-tRNA and P-site-bound deacylated tRNA move to the P and E sites, respectively. Catalyzes the coordinated movement of the two tRNA molecules, the mRNA and conformational changes in the ribosome. The protein is Elongation factor G of Ehrlichia ruminantium (strain Welgevonden).